A 205-amino-acid chain; its full sequence is Thymidylate kinase (205 aa).

An ATP-binding site is contributed by 10–17; sequence GIDGAGKS.

Belongs to the thymidylate kinase family.

It carries out the reaction dTMP + ATP = dTDP + ADP. Functionally, phosphorylation of dTMP to form dTDP in both de novo and salvage pathways of dTTP synthesis. This chain is Thymidylate kinase, found in Ralstonia nicotianae (strain ATCC BAA-1114 / GMI1000) (Ralstonia solanacearum).